The following is a 233-amino-acid chain: Cytidylate kinase (233 aa).

15-23 (GPSGAGKSS) is an ATP binding site. A compositionally biased stretch (basic and acidic residues) spans 183-200 (QRDRQDEGREHAPLKQAE). The interval 183 to 203 (QRDRQDEGREHAPLKQAEDAV) is disordered.

The protein belongs to the cytidylate kinase family. Type 1 subfamily.

The protein resides in the cytoplasm. The catalysed reaction is CMP + ATP = CDP + ADP. It carries out the reaction dCMP + ATP = dCDP + ADP. This is Cytidylate kinase from Geobacter sp. (strain M21).